Consider the following 600-residue polypeptide: Aspartate--tRNA(Asp/Asn) ligase (600 aa).

Position 174 (Glu174) interacts with L-aspartate. The tract at residues 198-201 (QLFK) is aspartate. An L-aspartate-binding site is contributed by Arg220. ATP contacts are provided by residues 220–222 (RDE) and Gln229. His457 lines the L-aspartate pocket. Position 491 (Glu491) interacts with ATP. Arg498 contributes to the L-aspartate binding site. 543–546 (GLDR) lines the ATP pocket.

Belongs to the class-II aminoacyl-tRNA synthetase family. Type 1 subfamily. As to quaternary structure, homodimer.

Its subcellular location is the cytoplasm. The enzyme catalyses tRNA(Asx) + L-aspartate + ATP = L-aspartyl-tRNA(Asx) + AMP + diphosphate. In terms of biological role, aspartyl-tRNA synthetase with relaxed tRNA specificity since it is able to aspartylate not only its cognate tRNA(Asp) but also tRNA(Asn). Reaction proceeds in two steps: L-aspartate is first activated by ATP to form Asp-AMP and then transferred to the acceptor end of tRNA(Asp/Asn). The polypeptide is Aspartate--tRNA(Asp/Asn) ligase (Burkholderia mallei (strain NCTC 10247)).